Reading from the N-terminus, the 552-residue chain is Dihydroxy-acid dehydratase (552 aa).

D78 is a binding site for Mg(2+). C119 is a binding site for [2Fe-2S] cluster. Mg(2+)-binding residues include D120 and K121. K121 bears the N6-carboxylysine mark. C190 contacts [2Fe-2S] cluster. E441 serves as a coordination point for Mg(2+). Residue S467 is the Proton acceptor of the active site.

It belongs to the IlvD/Edd family. Homodimer. [2Fe-2S] cluster serves as cofactor. Requires Mg(2+) as cofactor.

The enzyme catalyses (2R)-2,3-dihydroxy-3-methylbutanoate = 3-methyl-2-oxobutanoate + H2O. It carries out the reaction (2R,3R)-2,3-dihydroxy-3-methylpentanoate = (S)-3-methyl-2-oxopentanoate + H2O. Its pathway is amino-acid biosynthesis; L-isoleucine biosynthesis; L-isoleucine from 2-oxobutanoate: step 3/4. The protein operates within amino-acid biosynthesis; L-valine biosynthesis; L-valine from pyruvate: step 3/4. In terms of biological role, functions in the biosynthesis of branched-chain amino acids. Catalyzes the dehydration of (2R,3R)-2,3-dihydroxy-3-methylpentanoate (2,3-dihydroxy-3-methylvalerate) into 2-oxo-3-methylpentanoate (2-oxo-3-methylvalerate) and of (2R)-2,3-dihydroxy-3-methylbutanoate (2,3-dihydroxyisovalerate) into 2-oxo-3-methylbutanoate (2-oxoisovalerate), the penultimate precursor to L-isoleucine and L-valine, respectively. This chain is Dihydroxy-acid dehydratase, found in Ignicoccus hospitalis (strain KIN4/I / DSM 18386 / JCM 14125).